The primary structure comprises 571 residues: OTU domain-containing protein 5 (571 aa).

2 disordered regions span residues 1–111 and 146–175; these read MTIL…GPGG and PGHS…GAGY. The span at 11 to 30 shows a compositional bias: pro residues; the sequence is PPDADPANEPPPPGPMPPAP. The segment covering 32-47 has biased composition (gly residues); that stretch reads RGGGVGVGGGGTGVGG. A compositionally biased stretch (pro residues) spans 63-75; it reads ASPPPQGPLPGPP. A Phosphoserine modification is found at serine 64. Positions 84–97 are enriched in low complexity; sequence AVPPGAVAGPRPQQ. Serine 165 bears the Phosphoserine mark. Phosphotyrosine is present on tyrosine 175. Position 177 is a phosphoserine (serine 177). Position 195 is a phosphothreonine (threonine 195). Residues 213 to 341 enclose the OTU domain; sequence FIIKQMKEDG…NIHYNSVVNP (129 aa). Residues 218 to 224 form a cys-loop region; sequence MKEDGAC. Residue aspartate 221 is part of the active site. Cysteine 224 (nucleophile) is an active-site residue. The tract at residues 273–283 is variable-loop; the sequence is KRKNNCHGNHI. Serine 328 bears the Phosphoserine; by MTOR mark. Residues 329–334 form a his-loop region; that stretch reads YHRNIH. Residue histidine 334 is part of the active site. A phosphoserine mark is found at serine 337 and serine 375. The tract at residues 418–502 is disordered; that stretch reads ARQVRGPSQP…PGTSSQFSAG (85 aa). Composition is skewed to low complexity over residues 430 to 443 and 450 to 462; these read ASAT…AASS and SRSP…ASSP. A Phosphoserine modification is found at serine 452. At threonine 507 the chain carries Phosphothreonine. Serine 508 carries the post-translational modification Phosphoserine; by MTOR.

Belongs to the peptidase C85 family. In terms of assembly, interacts with TRAF3. In terms of processing, phosphorylation at Ser-177 is required for deubiquitinating activity. Phosphorylation at Ser-328, Ser-337 and Ser-508 by MTOR promotes its activity. In terms of tissue distribution, expressed in various tissues, including the liver and placenta, as well as in peripheral blood leukocytes.

The protein resides in the nucleus. It carries out the reaction Thiol-dependent hydrolysis of ester, thioester, amide, peptide and isopeptide bonds formed by the C-terminal Gly of ubiquitin (a 76-residue protein attached to proteins as an intracellular targeting signal).. With respect to regulation, inhibited by N-ethyl-maleimide (NEM). Its function is as follows. Deubiquitinating enzyme that functions as a negative regulator of the innate immune system. Has peptidase activity towards 'Lys-48'- and 'Lys-63'-linked polyubiquitin chains. Can also cleave 'Lys-11'-linked ubiquitin chains (in vitro). Acts via TRAF3 deubiquitination and subsequent suppression of type I interferon (IFN) production. Controls neuroectodermal differentiation through cleaving 'Lys-48'-linked ubiquitin chains to counteract degradation of select chromatin regulators such as ARID1A, HDAC2 and HCF1. Acts as a positive regulator of mTORC1 and mTORC2 signaling following phosphorylation by MTOR: acts by mediating deubiquitination of BTRC, leading to its stability. The polypeptide is OTU domain-containing protein 5 (Homo sapiens (Human)).